Here is a 514-residue protein sequence, read N- to C-terminus: Type-2 serine--tRNA ligase (514 aa).

L-serine is bound at residue A313. Position 315 (C315) interacts with Zn(2+). R344 contributes to the L-serine binding site. Residues 344–346 (RWE) and 355–356 (RV) contribute to the ATP site. 361 to 363 (RGE) lines the L-serine pocket. Residues E363 and C470 each coordinate Zn(2+). Position 477 (R477) interacts with ATP.

The protein belongs to the class-II aminoacyl-tRNA synthetase family. Type-2 seryl-tRNA synthetase subfamily. Homodimer. Requires Zn(2+) as cofactor.

The protein localises to the cytoplasm. It catalyses the reaction tRNA(Ser) + L-serine + ATP = L-seryl-tRNA(Ser) + AMP + diphosphate + H(+). The enzyme catalyses tRNA(Sec) + L-serine + ATP = L-seryl-tRNA(Sec) + AMP + diphosphate + H(+). Its pathway is aminoacyl-tRNA biosynthesis; selenocysteinyl-tRNA(Sec) biosynthesis; L-seryl-tRNA(Sec) from L-serine and tRNA(Sec): step 1/1. Functionally, catalyzes the attachment of serine to tRNA(Ser). Is also able to aminoacylate tRNA(Sec) with serine, to form the misacylated tRNA L-seryl-tRNA(Sec), which will be further converted into selenocysteinyl-tRNA(Sec). In Methanococcus maripaludis (strain C6 / ATCC BAA-1332), this protein is Type-2 serine--tRNA ligase.